Here is a 132-residue protein sequence, read N- to C-terminus: Evasin P985 (132 aa).

The signal sequence occupies residues 1 to 24; it reads MHSTIAYVSLLPLALFVAMHGAST. 6 N-linked (GlcNAc...) asparagine glycosylation sites follow: asparagine 45, asparagine 69, asparagine 74, asparagine 103, asparagine 111, and asparagine 117. Intrachain disulfides connect cysteine 48-cysteine 70, cysteine 66-cysteine 109, cysteine 83-cysteine 114, and cysteine 104-cysteine 123.

It is found in the secreted. Salivary chemokine-binding protein which binds to host chemokine CCL5. This is Evasin P985 from Amblyomma parvum (South American tick).